We begin with the raw amino-acid sequence, 1298 residues long: MAAADAEAVPARGEPQQDCCVKTELLGEETPMAADEGSAEKQAGEAHMAADGETNGSCENSDASSHANAAKHTQDSARVNPQDGTNTLTRIAENGVSERDSEAAKQNHVTADDFVQTSVIGSNGYILNKPALQAQPLRTTSTLASSLPGHAAKTLPGGAGKGRTPSAFPQTPAAPPATLGEGSADTEDRKLPAPGADVKVHRARKTMPKSVVGLHAASKDPREVREARDHKEPKEEINKNISDFGRQQLLPPFPSLHQSLPQNQCYMATTKSQTACLPFVLAAAVSRKKKRRMGTYSLVPKKKTKVLKQRTVIEMFKSITHSTVGSKGEKDLGASSLHVNGESLEMDSDEDDSEELEEDDGHGAEQAAAFPTEDSRTSKESMSEADRAQKMDGESEEEQESVDTGEEEEGGDESDLSSESSIKKKFLKRKGKTDSPWIKPARKRRRRSRKKPSGALGSESYKSSAGSAEQTAPGDSTGYMEVSLDSLDLRVKGILSSQAEGLANGPDVLETDGLQEVPLCSCRMETPKSREITTLANNQCMATESVDHELGRCTNSVVKYELMRPSNKAPLLVLCEDHRGRMVKHQCCPGCGYFCTAGNFMECQPESSISHRFHKDCASRVNNASYCPHCGEESSKAKEVTIAKADTTSTVTPVPGQEKGSALEGRADTTTGSAAGPPLSEDDKLQGAASHVPEGFDPTGPAGLGRPTPGLSQGPGKETLESALIALDSEKPKKLRFHPKQLYFSARQGELQKVLLMLVDGIDPNFKMEHQNKRSPLHAAAEAGHVDICHMLVQAGANIDTCSEDQRTPLMEAAENNHLEAVKYLIKAGALVDPKDAEGSTCLHLAAKKGHYEVVQYLLSNGQMDVNCQDDGGWTPMIWATEYKHVDLVKLLLSKGSDINIRDNEENICLHWAAFSGCVDIAEILLAAKCDLHAVNIHGDSPLHIAARENRYDCVVLFLSRDSDVTLKNKEGETPLQCASLNSQVWSALQMSKALQDSAPDRPSPVERIVSRDIARGYERIPIPCVNAVDSEPCPSNYKYVSQNCVTSPMNIDRNITHLQYCVCIDDCSSSNCMCGQLSMRCWYDKDGRLLPEFNMAEPPLIFECNHACSCWRNCRNRVVQNGLRARLQLYRTRDMGWGVRSLQDIPPGTFVCEYVGELISDSEADVREEDSYLFDLDNKDGEVYCIDARFYGNVSRFINHHCEPNLVPVRVFMAHQDLRFPRIAFFSTRLIEAGEQLGFDYGERFWDIKGKLFSCRCGSPKCRHSSAALAQRQASAAQEAQEDGLPDTSSAAAADPL.

2 disordered regions span residues 1 to 111 (MAAA…HVTA) and 144 to 192 (ASSL…RKLP). Ala-2 carries the N-acetylalanine modification. A Glycyl lysine isopeptide (Lys-Gly) (interchain with G-Cter in SUMO1); alternate cross-link involves residue Lys-22. Residue Lys-22 forms a Glycyl lysine isopeptide (Lys-Gly) (interchain with G-Cter in SUMO2); alternate linkage. Positions 38 to 50 (SAEKQAGEAHMAA) are enriched in basic and acidic residues. Composition is skewed to polar residues over residues 54–67 (TNGSCENSDASSHA) and 76–89 (SARVNPQDGTNTLT). A compositionally biased stretch (basic and acidic residues) spans 96-105 (VSERDSEAAK). Glycyl lysine isopeptide (Lys-Gly) (interchain with G-Cter in SUMO2) cross-links involve residues Lys-190, Lys-199, Lys-231, Lys-234, Lys-317, and Lys-327. Residues 211-234 (VVGLHAASKDPREVREARDHKEPK) form a disordered region. Residues 217–234 (ASKDPREVREARDHKEPK) are compositionally biased toward basic and acidic residues. The disordered stretch occupies residues 339 to 479 (VNGESLEMDS…QTAPGDSTGY (141 aa)). The segment covering 344–360 (LEMDSDEDDSEELEEDD) has biased composition (acidic residues). A compositionally biased stretch (basic and acidic residues) spans 373 to 393 (EDSRTSKESMSEADRAQKMDG). Residues 394–416 (ESEEEQESVDTGEEEEGGDESDL) show a composition bias toward acidic residues. Lys-432 is covalently cross-linked (Glycyl lysine isopeptide (Lys-Gly) (interchain with G-Cter in SUMO2)). Ser-435 carries the post-translational modification Phosphoserine. The span at 440 to 452 (PARKRRRRSRKKP) shows a compositional bias: basic residues. Residues 460–474 (SYKSSAGSAEQTAPG) are compositionally biased toward polar residues. Ser-483 is subject to Phosphoserine. Residues Lys-492, Lys-559, Lys-644, Lys-659, Lys-684, and Lys-731 each participate in a glycyl lysine isopeptide (Lys-Gly) (interchain with G-Cter in SUMO2) cross-link. Positions 644 to 717 (KADTTSTVTP…TPGLSQGPGK (74 aa)) are disordered. ANK repeat units lie at residues 737–766 (FHPKQLYFSARQGELQKVLLMLVDGIDPNF), 772–801 (NKRSPLHAAAEAGHVDICHMLVQAGANIDT), 805–834 (DQRTPLMEAAENNHLEAVKYLIKAGALVDP), 838–868 (EGSTCLHLAAKKGHYEVVQYLLSNGQMDVNC), 872–901 (GGWTPMIWATEYKHVDLVKLLLSKGSDINI), 905–934 (EENICLHWAAFSGCVDIAEILLAAKCDLHA), 938–967 (HGDSPLHIAARENRYDCVVLFLSRDSDVTL), and 971–1004 (EGETPLQCASLNSQVWSALQMSKALQDSAPDRPS). The interval 905 to 907 (EEN) is histone H3K9me binding. A phosphoserine mark is found at Ser-1004 and Ser-1048. Residues 1060-1123 (QYCVCIDDCS…NCRNRVVQNG (64 aa)) enclose the Pre-SET domain. The Zn(2+) site is built by Cys-1062, Cys-1064, Cys-1068, Cys-1073, Cys-1075, Cys-1105, Cys-1109, Cys-1111, and Cys-1115. Positions 1126–1243 (ARLQLYRTRD…AGEQLGFDYG (118 aa)) constitute an SET domain. Residues 1136 to 1138 (MGW), Tyr-1173, and 1200 to 1201 (NH) contribute to the S-adenosyl-L-methionine site. Positions 1162-1181 (DSEADVREEDSYLFDLDNKD) are interaction with histone H3. Cys-1203 is a binding site for Zn(2+). Residues 1242-1245 (YGER) form an interaction with histone H3 region. Cys-1256 lines the Zn(2+) pocket. Arg-1257 is an S-adenosyl-L-methionine binding site. 2 residues coordinate Zn(2+): Cys-1258 and Cys-1263. Residues 1274–1298 (QASAAQEAQEDGLPDTSSAAAADPL) form a disordered region.

It belongs to the class V-like SAM-binding methyltransferase superfamily. As to quaternary structure, heterodimer; heterodimerizes with EHMT2. Interacts with WIZ and EHMT2. Part of the E2F6.com-1 complex in G0 phase composed of E2F6, MGA, MAX, TFDP1, CBX3, BAT8, EHMT1, RING1, RNF2, MBLR, L3MBTL2 and YAF2. Interacts (via ANK repeats) with RELA (when monomethylated at 'Lys-310'). Interacts with MPHOSPH8. Interacts with CDYL. Interacts with REST only in the presence of CDYL. Part of a complex containing at least CDYL, REST, WIZ, SETB1, EHMT1 and EHMT2. Interacts with BAZ2B. In terms of tissue distribution, widely expressed.

It localises to the nucleus. The protein localises to the chromosome. The enzyme catalyses N(6)-methyl-L-lysyl(9)-[histone H3] + S-adenosyl-L-methionine = N(6),N(6)-dimethyl-L-lysyl(9)-[histone H3] + S-adenosyl-L-homocysteine + H(+). The catalysed reaction is L-lysyl(9)-[histone H3] + S-adenosyl-L-methionine = N(6)-methyl-L-lysyl(9)-[histone H3] + S-adenosyl-L-homocysteine + H(+). Methyltransferase activity is inhibited by BIX-01294. Efficiently inhibited by compound E72, a BIX-01294 derivative in which the diazepane ring and the benzyl are replaced with a 3-dimethylaminopropyl and a 5-aminopentyl group at sites B and C, respectively. Functionally, histone methyltransferase that specifically mono- and dimethylates 'Lys-9' of histone H3 (H3K9me1 and H3K9me2, respectively) in euchromatin. H3K9me represents a specific tag for epigenetic transcriptional repression by recruiting HP1 proteins to methylated histones. Also weakly methylates 'Lys-27' of histone H3 (H3K27me). Also required for DNA methylation, the histone methyltransferase activity is not required for DNA methylation, suggesting that these 2 activities function independently. Probably targeted to histone H3 by different DNA-binding proteins like E2F6, MGA, MAX and/or DP1. During G0 phase, it probably contributes to silencing of MYC- and E2F-responsive genes, suggesting a role in G0/G1 transition in cell cycle. In addition to the histone methyltransferase activity, also methylates non-histone proteins: mediates dimethylation of 'Lys-373' of p53/TP53. Represses the expression of mitochondrial function-related genes, perhaps by occupying their promoter regions, working in concert with probable chromatin reader BAZ2B. The sequence is that of Histone-lysine N-methyltransferase EHMT1 (EHMT1) from Homo sapiens (Human).